Reading from the N-terminus, the 671-residue chain is DNA ligase (671 aa).

NAD(+)-binding positions include 32–36, 81–82, and E113; these read DAEYD and SL. K115 acts as the N6-AMP-lysine intermediate in catalysis. 4 residues coordinate NAD(+): R136, E173, K290, and K314. Residues C408, C411, C426, and C432 each contribute to the Zn(2+) site. A BRCT domain is found at 593–671; sequence EIDSPFAGKT…EAEMLRLLGS (79 aa).

Belongs to the NAD-dependent DNA ligase family. LigA subfamily. Requires Mg(2+) as cofactor. Mn(2+) is required as a cofactor.

The catalysed reaction is NAD(+) + (deoxyribonucleotide)n-3'-hydroxyl + 5'-phospho-(deoxyribonucleotide)m = (deoxyribonucleotide)n+m + AMP + beta-nicotinamide D-nucleotide.. Functionally, DNA ligase that catalyzes the formation of phosphodiester linkages between 5'-phosphoryl and 3'-hydroxyl groups in double-stranded DNA using NAD as a coenzyme and as the energy source for the reaction. It is essential for DNA replication and repair of damaged DNA. The polypeptide is DNA ligase (Shigella sonnei (strain Ss046)).